The chain runs to 828 residues: DNA gyrase subunit A (828 aa).

A Topo IIA-type catalytic domain is found at 32–497 (LPDVRDGLKP…EVLSLEDEDL (466 aa)). The O-(5'-phospho-DNA)-tyrosine intermediate role is filled by Tyr120. The GyrA-box motif lies at 524–530 (QKRGGRG).

The protein belongs to the type II topoisomerase GyrA/ParC subunit family. As to quaternary structure, heterotetramer, composed of two GyrA and two GyrB chains. In the heterotetramer, GyrA contains the active site tyrosine that forms a transient covalent intermediate with DNA, while GyrB binds cofactors and catalyzes ATP hydrolysis.

It is found in the cytoplasm. The enzyme catalyses ATP-dependent breakage, passage and rejoining of double-stranded DNA.. In terms of biological role, a type II topoisomerase that negatively supercoils closed circular double-stranded (ds) DNA in an ATP-dependent manner to modulate DNA topology and maintain chromosomes in an underwound state. Negative supercoiling favors strand separation, and DNA replication, transcription, recombination and repair, all of which involve strand separation. Also able to catalyze the interconversion of other topological isomers of dsDNA rings, including catenanes and knotted rings. Type II topoisomerases break and join 2 DNA strands simultaneously in an ATP-dependent manner. The sequence is that of DNA gyrase subunit A from Streptococcus pyogenes serotype M18 (strain MGAS8232).